Here is a 183-residue protein sequence, read N- to C-terminus: Threonylcarbamoyl-AMP synthase (183 aa).

One can recognise a YrdC-like domain in the interval 1–183; that stretch reads MNFTEIAEKL…LLTDQLIREG (183 aa).

The protein belongs to the SUA5 family. TsaC subfamily.

The protein resides in the cytoplasm. It catalyses the reaction L-threonine + hydrogencarbonate + ATP = L-threonylcarbamoyladenylate + diphosphate + H2O. Its function is as follows. Required for the formation of a threonylcarbamoyl group on adenosine at position 37 (t(6)A37) in tRNAs that read codons beginning with adenine. Catalyzes the conversion of L-threonine, HCO(3)(-)/CO(2) and ATP to give threonylcarbamoyl-AMP (TC-AMP) as the acyladenylate intermediate, with the release of diphosphate. This chain is Threonylcarbamoyl-AMP synthase, found in Actinobacillus succinogenes (strain ATCC 55618 / DSM 22257 / CCUG 43843 / 130Z).